The following is a 173-amino-acid chain: Inorganic pyrophosphatase (173 aa).

The substrate site is built by lysine 26, arginine 40, and tyrosine 52. Residues aspartate 62, aspartate 67, and aspartate 99 each contribute to the Mg(2+) site. Tyrosine 138 is a binding site for substrate.

It belongs to the PPase family. As to quaternary structure, homohexamer. The cofactor is Mg(2+).

The protein localises to the cytoplasm. The enzyme catalyses diphosphate + H2O = 2 phosphate + H(+). Its function is as follows. Catalyzes the hydrolysis of inorganic pyrophosphate (PPi) forming two phosphate ions. This Sulfolobus acidocaldarius (strain ATCC 33909 / DSM 639 / JCM 8929 / NBRC 15157 / NCIMB 11770) protein is Inorganic pyrophosphatase.